A 135-amino-acid polypeptide reads, in one-letter code: Protein NrdI (135 aa).

It belongs to the NrdI family.

Probably involved in ribonucleotide reductase function. This chain is Protein NrdI, found in Brucella abortus (strain S19).